Reading from the N-terminus, the 406-residue chain is Testis-specific Y-encoded-like protein 5 (406 aa).

Over residues 1-25 (MSGRSRGRKSSRAKGRGKGRARARV) the composition is skewed to basic residues. 3 disordered regions span residues 1–67 (MSGR…PAEL), 132–164 (IGNRRVPGRKAPDTRSATGRGPQATVSGKPKMA), and 382–406 (RGEKGKEERPGPAKLSPAPAVRQPN). Residues 27-38 (AAAEDAWHDEKP) are compositionally biased toward basic and acidic residues. Positions 49–62 (AAAQVQAGAAQGGA) are enriched in low complexity. Basic and acidic residues predominate over residues 382–392 (RGEKGKEERPG).

The protein belongs to the nucleosome assembly protein (NAP) family. Interacts with USP7.

Its function is as follows. Involved in modulation of cell growth and cellular response to gamma radiation probably via regulation of the Akt signaling pathway. Involved in regulation of p53/TP53. Suppresses p53/TP53 protein levels and promotes its ubiquitination; the function is dependent on USP7 and independent on MDM2. Proposed to displace p53/TP53 from interaction with USP7. The protein is Testis-specific Y-encoded-like protein 5 (Tspyl5) of Mus musculus (Mouse).